We begin with the raw amino-acid sequence, 95 residues long: Small ribosomal subunit protein bS6 (95 aa).

Belongs to the bacterial ribosomal protein bS6 family.

Its function is as follows. Binds together with bS18 to 16S ribosomal RNA. The protein is Small ribosomal subunit protein bS6 of Shouchella clausii (strain KSM-K16) (Alkalihalobacillus clausii).